Reading from the N-terminus, the 281-residue chain is ATP synthase subunit a (281 aa).

7 helical membrane passes run 56 to 76 (KPML…WAAF), 117 to 137 (LVVS…IPVA), 144 to 164 (IIAY…TLTF), 181 to 201 (KSLG…NILI), 215 to 235 (FAGH…LNGV), 237 to 257 (IAYA…ELFI), and 259 to 279 (ALQA…AMAE).

The protein belongs to the ATPase A chain family. As to quaternary structure, F-type ATPases have 2 components, CF(1) - the catalytic core - and CF(0) - the membrane proton channel. CF(1) has five subunits: alpha(3), beta(3), gamma(1), delta(1), epsilon(1). CF(0) has three main subunits: a(1), b(2) and c(9-12). The alpha and beta chains form an alternating ring which encloses part of the gamma chain. CF(1) is attached to CF(0) by a central stalk formed by the gamma and epsilon chains, while a peripheral stalk is formed by the delta and b chains.

It is found in the cell membrane. Its function is as follows. Key component of the proton channel; it plays a direct role in the translocation of protons across the membrane. The sequence is that of ATP synthase subunit a from Streptomyces lividans.